Here is a 144-residue protein sequence, read N- to C-terminus: Large ribosomal subunit protein uL15 (144 aa).

The disordered stretch occupies residues 1–57; sequence MQLNDLRSAPGARREKHRPGRGIGSGLGKTGGRGHKGLTSRSGGKVAPGFEGGQQPL. Positions 21–31 are enriched in gly residues; it reads RGIGSGLGKTG.

The protein belongs to the universal ribosomal protein uL15 family. In terms of assembly, part of the 50S ribosomal subunit.

Functionally, binds to the 23S rRNA. The polypeptide is Large ribosomal subunit protein uL15 (Pseudomonas aeruginosa (strain LESB58)).